A 598-amino-acid polypeptide reads, in one-letter code: MIKSYYLFFIILIFLIFINNFILCENNNNNKYNNNNNYPFINVDKIIYTNSSNSIYLVWSNEQFNLILQSSYNEEFDDIVMIGEYFDKIETTGWGELNITFNSNSATIQISDNEQAYFTGFIESVLTGERINQMYNNFAASEFTNSDHTPSPKLIDFLNTQMEFVRDQVFENNGSSQYWYSTGLIMSQFDGLVNGYQQSPFPQLSEIQLYILTSAGDLETLVTLFPSSSSSSSSTTNENKNKNIKISSIKPNFKDELTDCSGFIRILPDYSDVYFGHTTWRYYYALLRIYKFINLQFNFQDTPMEYKVSFSSSPGFISSKDDFYITGNKLAIMETTNNIYNESLYQYTIPQSVLVWQRAMIANMIATNSSDWVKIFSEFNSGTYQNQWMVFDYKLFIPNKQQSSSSLPPNTFWIAEQIPGQVKTADLTNILNEQGYWKSYNIPYFESIYNISGYSEKTDLPPSYQYSYEKCPRSLIFSRNASDVLNFEDMKSLMQFNNYKTDPLSYSSPLNSISSRGDLLTIENGNRSAVAFGGVDSKITSFNQVLTLSCTAISGPSTNGGTLPPFTWSQSPLFQNITHIGVPETFNFDWQEMGPYPN.

The first 24 residues, 1–24, serve as a signal peptide directing secretion; that stretch reads MIKSYYLFFIILIFLIFINNFILC. Residues Asn-50, Asn-98, Asn-173, Asn-341, Asn-368, Asn-450, Asn-480, Asn-526, and Asn-576 are each glycosylated (N-linked (GlcNAc...) asparagine).

The protein belongs to the phospholipase B-like family.

It is found in the secreted. Probable phospholipase. This chain is Phospholipase B-like protein G (plbG), found in Dictyostelium discoideum (Social amoeba).